We begin with the raw amino-acid sequence, 140 residues long: Dehydratase ustZ (140 aa).

The 96-residue stretch at 18–113 (PGISTEDYRN…GPDHEKFADT (96 aa)) folds into the EthD domain.

Belongs to the tpcK family.

The enzyme catalyses naphtopyrone YWA1 = norrubrofusarin + H2O + H(+). It participates in secondary metabolite biosynthesis. Functionally, dehydratase; part of the gene cluster that mediates the biosynthesis of ustilaginoidins, dimeric gamma-naphthopyrones isolated from different fungal species. The first step in the biosynthesis of ustilaginoidins is the production of gamma-naphthopyrone precursor YWA1 by the non-reducing polyketide synthase ustP, via condensation of one acetyl-CoA starter unit with 6 malonyl-CoA units. YWA1 is then probably substrate of the ustZ to yield norrubrofusarin via a dehydration reaction. A key enzyme in the biosynthetic pathway is the laccase ustL, which catalyzes the oxidative dimerization of norrubrofusarin to ustilaginoidin A. It can produce the M- and P-atropisomers in varying amounts, depending on the reaction conditions. For the biosynthesis of 3-methylustilaginoid in derivatives such as chaetochromin A, a methylated derivative of YWA1 is required. The C-methylation is considered to be catalyzed by ustM, the phosphopantetheine attachment site of which indicates that it acts on the growing polyketide chain before release of the product. For the biosynthesis of chaetochromin A, it is assumed that saturation of the D2 double bond takes place before dimerization, and is probably catalyzed by an external reductase because no candidate gene was identified within the cluster. In Ustilaginoidea virens (Rice false smut fungus), this protein is Dehydratase ustZ.